The sequence spans 253 residues: Sulfate transporter CysZ (253 aa).

4 consecutive transmembrane segments (helical) span residues 31 to 51 (FVILPLLVNILLMGGAFWWLF), 75 to 95 (LLWPLAVISVLLVFGYFFSTI), 151 to 171 (IVLLILYFIPGIGQTVAPVLW), and 222 to 242 (IPLLNLFIMPVAVCGATAMWV).

The protein belongs to the CysZ family.

Its subcellular location is the cell inner membrane. In terms of biological role, high affinity, high specificity proton-dependent sulfate transporter, which mediates sulfate uptake. Provides the sulfur source for the cysteine synthesis pathway. This Escherichia coli O7:K1 (strain IAI39 / ExPEC) protein is Sulfate transporter CysZ.